The primary structure comprises 299 residues: Probable xyloglucan endotransglucosylase/hydrolase protein 10 (299 aa).

Residues 1-29 (MTLINRSKPFVLLVGFSIISSLLLWVSQA) form the signal peptide. The GH16 domain maps to 30 to 225 (SVVSSGDFNK…WSKGPFVASF (196 aa)). N-linked (GlcNAc...) asparagine glycosylation occurs at Asn-51. The active-site Nucleophile is Glu-111. Glu-115 functions as the Proton donor in the catalytic mechanism. Residues Glu-115, 128-130 (QTN), 138-140 (NRE), 204-205 (SW), and Gly-209 each bind xyloglucan. Cystine bridges form between Cys-233–Cys-242 and Cys-280–Cys-294. Asn-238 carries N-linked (GlcNAc...) asparagine glycosylation. A xyloglucan-binding site is contributed by Arg-285.

The protein belongs to the glycosyl hydrolase 16 family. XTH group 1 subfamily. Contains at least one intrachain disulfide bond essential for its enzymatic activity.

It localises to the secreted. It is found in the cell wall. Its subcellular location is the extracellular space. The protein resides in the apoplast. It carries out the reaction breaks a beta-(1-&gt;4) bond in the backbone of a xyloglucan and transfers the xyloglucanyl segment on to O-4 of the non-reducing terminal glucose residue of an acceptor, which can be a xyloglucan or an oligosaccharide of xyloglucan.. Its function is as follows. Catalyzes xyloglucan endohydrolysis (XEH) and/or endotransglycosylation (XET). Cleaves and religates xyloglucan polymers, an essential constituent of the primary cell wall, and thereby participates in cell wall construction of growing tissues. This is Probable xyloglucan endotransglucosylase/hydrolase protein 10 (XTH10) from Arabidopsis thaliana (Mouse-ear cress).